A 397-amino-acid chain; its full sequence is DNA-directed RNA polymerase subunit Rpo1C (397 aa).

This sequence belongs to the RNA polymerase beta' chain family. Part of the RNA polymerase complex.

Its subcellular location is the cytoplasm. It catalyses the reaction RNA(n) + a ribonucleoside 5'-triphosphate = RNA(n+1) + diphosphate. Its function is as follows. DNA-dependent RNA polymerase (RNAP) catalyzes the transcription of DNA into RNA using the four ribonucleoside triphosphates as substrates. Forms part of the jaw domain. The sequence is that of DNA-directed RNA polymerase subunit Rpo1C from Methanosarcina acetivorans (strain ATCC 35395 / DSM 2834 / JCM 12185 / C2A).